The following is a 250-amino-acid chain: Triosephosphate isomerase (250 aa).

9–11 (NWK) is a substrate binding site. Catalysis depends on His94, which acts as the Electrophile. Glu165 acts as the Proton acceptor in catalysis. Substrate contacts are provided by residues Gly171, Ser211, and 232-233 (GG).

Belongs to the triosephosphate isomerase family. As to quaternary structure, homodimer.

The protein localises to the cytoplasm. The enzyme catalyses D-glyceraldehyde 3-phosphate = dihydroxyacetone phosphate. The protein operates within carbohydrate biosynthesis; gluconeogenesis. It participates in carbohydrate degradation; glycolysis; D-glyceraldehyde 3-phosphate from glycerone phosphate: step 1/1. Involved in the gluconeogenesis. Catalyzes stereospecifically the conversion of dihydroxyacetone phosphate (DHAP) to D-glyceraldehyde-3-phosphate (G3P). This is Triosephosphate isomerase from Alkalilimnicola ehrlichii (strain ATCC BAA-1101 / DSM 17681 / MLHE-1).